A 533-amino-acid polypeptide reads, in one-letter code: Intestinal-type alkaline phosphatase (533 aa).

The N-terminal stretch at 1-19 (MQGACVLLLLGLHLQLSLG) is a signal peptide. Asp61 is a binding site for Mg(2+). Zn(2+) is bound by residues Asp61 and Ser111. Ser111 acts as the Phosphoserine intermediate in catalysis. Cys140 and Cys202 form a disulfide bridge. A Mg(2+)-binding site is contributed by Ser174. Glu235 contributes to the Ca(2+) binding site. The N-linked (GlcNAc...) asparagine glycan is linked to Asn268. Ca(2+) contacts are provided by Phe288, Glu289, and Asp304. Glu330 provides a ligand contact to Mg(2+). 4 residues coordinate Zn(2+): Asp335, His339, Asp376, and His377. Asn429 carries an N-linked (GlcNAc...) asparagine glycan. His451 provides a ligand contact to Zn(2+). Cysteines 486 and 493 form a disulfide. Residue Asp506 is the site of GPI-anchor amidated aspartate attachment. Residues 507 to 533 (AAHLAASPPPLALLAGAMLLLLAPTLY) constitute a propeptide, removed in mature form.

The protein belongs to the alkaline phosphatase family. In terms of assembly, homodimer. Mg(2+) is required as a cofactor. It depends on Zn(2+) as a cofactor. The cofactor is Ca(2+).

The protein localises to the cell membrane. The enzyme catalyses a phosphate monoester + H2O = an alcohol + phosphate. Alkaline phosphatase that can hydrolyze various phosphate compounds. The sequence is that of Intestinal-type alkaline phosphatase (ALPI) from Bos taurus (Bovine).